We begin with the raw amino-acid sequence, 405 residues long: Tryptophan synthase beta chain (405 aa).

At lysine 95 the chain carries N6-(pyridoxal phosphate)lysine.

The protein belongs to the TrpB family. In terms of assembly, tetramer of two alpha and two beta chains. It depends on pyridoxal 5'-phosphate as a cofactor.

The catalysed reaction is (1S,2R)-1-C-(indol-3-yl)glycerol 3-phosphate + L-serine = D-glyceraldehyde 3-phosphate + L-tryptophan + H2O. Its pathway is amino-acid biosynthesis; L-tryptophan biosynthesis; L-tryptophan from chorismate: step 5/5. In terms of biological role, the beta subunit is responsible for the synthesis of L-tryptophan from indole and L-serine. In Pseudomonas putida (strain GB-1), this protein is Tryptophan synthase beta chain.